Here is a 124-residue protein sequence, read N- to C-terminus: Large ribosomal subunit protein bL12 (124 aa).

It belongs to the bacterial ribosomal protein bL12 family. Homodimer. Part of the ribosomal stalk of the 50S ribosomal subunit. Forms a multimeric L10(L12)X complex, where L10 forms an elongated spine to which 2 to 4 L12 dimers bind in a sequential fashion. Binds GTP-bound translation factors.

In terms of biological role, forms part of the ribosomal stalk which helps the ribosome interact with GTP-bound translation factors. Is thus essential for accurate translation. This is Large ribosomal subunit protein bL12 from Bacteroides fragilis (strain ATCC 25285 / DSM 2151 / CCUG 4856 / JCM 11019 / LMG 10263 / NCTC 9343 / Onslow / VPI 2553 / EN-2).